The sequence spans 294 residues: Bifunctional protein FolD (294 aa).

NADP(+) contacts are provided by residues 166–168 (GRS), serine 191, and isoleucine 232.

It belongs to the tetrahydrofolate dehydrogenase/cyclohydrolase family. As to quaternary structure, homodimer.

It carries out the reaction (6R)-5,10-methylene-5,6,7,8-tetrahydrofolate + NADP(+) = (6R)-5,10-methenyltetrahydrofolate + NADPH. The catalysed reaction is (6R)-5,10-methenyltetrahydrofolate + H2O = (6R)-10-formyltetrahydrofolate + H(+). Its pathway is one-carbon metabolism; tetrahydrofolate interconversion. Its function is as follows. Catalyzes the oxidation of 5,10-methylenetetrahydrofolate to 5,10-methenyltetrahydrofolate and then the hydrolysis of 5,10-methenyltetrahydrofolate to 10-formyltetrahydrofolate. This Bradyrhizobium sp. (strain ORS 278) protein is Bifunctional protein FolD.